The primary structure comprises 20 residues: Brevinin-1ITa (20 aa).

Methionine 8 carries the post-translational modification Methionine sulfoxide; partial. A disulfide bond links cysteine 14 and cysteine 20.

It belongs to the frog skin active peptide (FSAP) family. Brevinin subfamily. In terms of tissue distribution, expressed by the skin glands.

The protein localises to the secreted. In terms of biological role, antimicrobial peptide active against Gram-positive bacterium S.epidermidis ATCC 12228 (MIC=4 uM), against Gram-negative bacterium E.coli ATCC 25922 (MIC=64 uM) and against yeast C.parapsilosis ATCC 22019 (MIC=16 uM). Has hemolytic and cytotoxic activity. This is Brevinin-1ITa from Rana italica (Italian stream frog).